Reading from the N-terminus, the 453-residue chain is Zinc finger and BTB domain-containing protein 44 (453 aa).

Lys4 is covalently cross-linked (Glycyl lysine isopeptide (Lys-Gly) (interchain with G-Cter in SUMO2)). The region spanning 31–98 (CDITIRVQDR…AYTATLSINT (68 aa)) is the BTB domain. Phosphoserine is present on residues Ser135, Ser159, Ser161, Ser165, Ser191, Ser194, and Ser199. Thr200 is modified (phosphothreonine). A disordered region spans residues 241–265 (QPEKAKQAENTRTLELPGPSEAGRR). Lys290 participates in a covalent cross-link: Glycyl lysine isopeptide (Lys-Gly) (interchain with G-Cter in SUMO2). Disordered regions lie at residues 295–324 (SDEE…PGSE) and 336–368 (SSSI…EDDR). Over residues 304–318 (SQPVSASQSSLSDQQ) the composition is skewed to low complexity. Polar residues predominate over residues 352-361 (TLQSTSSTNA). C2H2-type zinc fingers lie at residues 399–421 (FQCP…MLIH) and 427–449 (FQCD…RLKH).

Its subcellular location is the nucleus. The sequence is that of Zinc finger and BTB domain-containing protein 44 (Zbtb44) from Rattus norvegicus (Rat).